The primary structure comprises 657 residues: Filensin (657 aa).

The segment at 1–38 (MYRSSFLREVRKEKYERSDAYDELRGSPEFDSLAQAQG) is head. In terms of domain architecture, IF rod spans 38–318 (GLENLQELNE…RIIENEDSRL (281 aa)). Positions 39–73 (LENLQELNERFASYINRARVLEQRNTILRKQLETF) are coil 1A. The segment at 74–82 (QRMDELVGL) is linker 1. The coil 1B stretch occupies residues 83–182 (DEAFAGQIEF…RYKKNLMEIQ (100 aa)). Residues 183–199 (TYVNILQQIIQTTPRVS) form a linker 12 region. A coil 2 region spans residues 200 to 318 (PITTGISEEK…RIIENEDSRL (119 aa)). A tail region spans residues 319-657 (NSAIAGTPVT…SKKKPGDKGS (339 aa)). 2 disordered regions span residues 503–530 (IGGD…ICER) and 565–593 (PDVS…TDHD). Basic and acidic residues predominate over residues 519–530 (PSEKEKRDICER).

Belongs to the intermediate filament family. In terms of tissue distribution, detected in eye lens fiber cells (at protein level). Detected in embryonic eye lens.

The protein localises to the cell membrane. Its subcellular location is the cytoplasm. It localises to the cytoskeleton. The protein resides in the cell cortex. Its function is as follows. Required for the correct formation of lens intermediate filaments. In Gallus gallus (Chicken), this protein is Filensin (BFSP1).